The primary structure comprises 168 residues: Photosystem I assembly protein Ycf3 (168 aa).

TPR repeat units follow at residues 35 to 68, 72 to 105, and 120 to 153; these read AFAY…EMDP, SYIL…NPFL, and GEQA…TPDN.

Belongs to the Ycf3 family.

It is found in the plastid membrane. In terms of biological role, essential for the assembly of the photosystem I (PSI) complex. May act as a chaperone-like factor to guide the assembly of the PSI subunits. This Cuscuta obtusiflora (Peruvian dodder) protein is Photosystem I assembly protein Ycf3.